Reading from the N-terminus, the 261-residue chain is Rhomboid-type serine protease 2 (261 aa).

Helical transmembrane passes span leucine 17–isoleucine 37, leucine 58–valine 78, isoleucine 94–leucine 114, proline 116–valine 136, and leucine 155–valine 175. Residue serine 124 is the Nucleophile of the active site. Residue histidine 177 is part of the active site.

The protein belongs to the peptidase S54 family.

The protein resides in the golgi apparatus membrane. It is found in the golgi apparatus. Its subcellular location is the cis-Golgi network membrane. The enzyme catalyses Cleaves type-1 transmembrane domains using a catalytic dyad composed of serine and histidine that are contributed by different transmembrane domains.. Its function is as follows. Probable rhomboid-type serine protease that catalyzes intramembrane proteolysis. This Eremothecium gossypii (strain ATCC 10895 / CBS 109.51 / FGSC 9923 / NRRL Y-1056) (Yeast) protein is Rhomboid-type serine protease 2 (RBD2).